Reading from the N-terminus, the 198-residue chain is Recombination protein RecR (198 aa).

The C4-type zinc-finger motif lies at 57–72 (CSVCGNLTDEDPCSIC). In terms of domain architecture, Toprim spans 80-175 (SMILVVEDSK…KVTRLARGLA (96 aa)).

The protein belongs to the RecR family.

Its function is as follows. May play a role in DNA repair. It seems to be involved in an RecBC-independent recombinational process of DNA repair. It may act with RecF and RecO. The protein is Recombination protein RecR of Streptococcus uberis (strain ATCC BAA-854 / 0140J).